The sequence spans 206 residues: uncharacterized protein (206 aa).

A signal peptide spans 1–18 (MSSLVLIPCALLTQGIYA).

This is an uncharacterized protein from Acanthamoeba polyphaga mimivirus (APMV).